A 470-amino-acid chain; its full sequence is Regulator of microtubule dynamics protein 3 (470 aa).

The Mitochondrial intermembrane portion of the chain corresponds to 1–12 (MSRLGALGGSRA). A helical membrane pass occupies residues 13–35 (GLGLLLGTAAGLGFLCVLYSQRW). Residues 36 to 470 (KRTQRHGRSH…DLEELEVILG (435 aa)) are Cytoplasmic-facing. Residues S44, S46, S50, and S57 each carry the phosphoserine modification. A coiled-coil region spans residues 91–125 (LDRLDFVLTSLMALRREVEELQRSLQGLAGEIVGE). The short motif at 157 to 163 (VYFTASS) is the FFAT element. Phosphothreonine is present on T160. Positions 168-205 (TDAESEGGYTTANAESDYERDSDKESGDAEDEVSCETV) are disordered. Phosphoserine occurs at positions 183, 193, 212, and 233. The segment covering 184–194 (DYERDSDKESG) has biased composition (basic and acidic residues).

This sequence belongs to the RMDN family. In terms of assembly, interacts with PTPN2. Interacts with microtubules. Interacts with VAPB. Interacts (via FFAT motif) with MOSPD2 (via MSP domain). Interacts (via phosphorylated FFAT motif) with MOSPD2, VAPA and VAPB. Phosphorylation at Thr-160 of the FFAT motif activates interaction with MOSPD2, VAPA and VAPB.

The protein localises to the mitochondrion outer membrane. It localises to the cytoplasm. The protein resides in the nucleus. It is found in the cytoskeleton. Its subcellular location is the spindle. The protein localises to the spindle pole. In terms of biological role, involved in cellular calcium homeostasis regulation. May participate in differentiation and apoptosis of keratinocytes. Overexpression induces apoptosis. This is Regulator of microtubule dynamics protein 3 from Mus musculus (Mouse).